A 227-amino-acid chain; its full sequence is E3 ubiquitin-protein ligase ZNRF1 (227 aa).

The tract at residues 1 to 42 is disordered; it reads MGGKQSTAARSRGPFPGVSTDDSAVPPPGGAPHFGHYRTGGG. A lipid anchor (N-myristoyl glycine) is attached at Gly2. Residues 2 to 10 form a required for endosomal and lysosomal localization and myristoylation region; that stretch reads GGKQSTAAR. Residues Ser50, Ser52, and Ser53 each carry the phosphoserine modification. The tract at residues 65 to 105 is disordered; sequence GGVPFSLYTPASRGTGDSERAPGGGGSTSDSTYAHGNGYQE. At Tyr103 the chain carries Phosphotyrosine. Ser123 carries the phosphoserine modification. The RING-type; atypical zinc finger occupies 184 to 225; the sequence is CVICLEELLQGDTIARLPCLCIYHKSCIDSWFEVNRSCPEHP.

As to quaternary structure, interacts with AKT1, GLUL and TUBB2A. Interacts with ZNRF2. Interacts (via its RING domain) with UBE2N. Interacts (when phosphorylated) with YWHAE. Post-translationally, N-myristoylation targets ZNRF1 to intracellular membranes. Phosphorylated by SRC at Tyr-103; leading to 'Lys-63'-linked ubiquitination of TLR3, lysosomal trafficking and degradation.

The protein resides in the endosome. Its subcellular location is the lysosome. It is found in the membrane. It localises to the cytoplasmic vesicle. The protein localises to the secretory vesicle. The protein resides in the synaptic vesicle membrane. The catalysed reaction is S-ubiquitinyl-[E2 ubiquitin-conjugating enzyme]-L-cysteine + [acceptor protein]-L-lysine = [E2 ubiquitin-conjugating enzyme]-L-cysteine + N(6)-ubiquitinyl-[acceptor protein]-L-lysine.. It participates in protein modification; protein ubiquitination. E3 ubiquitin-protein ligase that plays a role in different processes including cell differentiation, receptor recycling or regulation of inflammation. Mediates the ubiquitination of AKT1 and GLUL, thereby playing a role in neuron cells differentiation. Plays a role in the establishment and maintenance of neuronal transmission and plasticity. Regulates Schwann cells differentiation by mediating ubiquitination of GLUL. Promotes neurodegeneration by mediating 'Lys-48'-linked polyubiquitination and subsequent degradation of AKT1 in axons: degradation of AKT1 prevents AKT1-mediated phosphorylation of GSK3B, leading to GSK3B activation and phosphorylation of DPYSL2/CRMP2 followed by destabilization of microtubule assembly in axons. Ubiquitinates the Na(+)/K(+) ATPase alpha-1 subunit/ATP1A1 and thereby influences its endocytosis and/or degradation. Controls ligand-induced EGFR signaling via mediating receptor ubiquitination and recruitment of the ESCRT machinery. Acts as a negative feedback mechanism controlling TLR3 trafficking by mediating TLR3 'Lys-63'-linked polyubiquitination to reduce type I IFN production. Modulates inflammation by promoting caveolin-1/CAV1 ubiquitination and degradation to regulate TLR4-activated immune response. This is E3 ubiquitin-protein ligase ZNRF1 (Znrf1) from Mus musculus (Mouse).